Here is a 78-residue protein sequence, read N- to C-terminus: U7-lycotoxin-Ls1e (78 aa).

The N-terminal stretch at 1–22 is a signal peptide; it reads MKLIIFTGLALLLIVSLIDVEA. Positions 23-26 are excised as a propeptide; that stretch reads QNEG.

The protein belongs to the neurotoxin 19 (CSTX) family. 07 (U7-Lctx) subfamily. Post-translationally, contains 4 disulfide bonds. As to expression, expressed by the venom gland.

The protein localises to the secreted. In Lycosa singoriensis (Wolf spider), this protein is U7-lycotoxin-Ls1e.